A 424-amino-acid polypeptide reads, in one-letter code: Proline--tRNA ligase (424 aa).

It belongs to the class-II aminoacyl-tRNA synthetase family. ProS type 2 subfamily. Homodimer.

Its subcellular location is the cytoplasm. It catalyses the reaction tRNA(Pro) + L-proline + ATP = L-prolyl-tRNA(Pro) + AMP + diphosphate. Its function is as follows. Catalyzes the attachment of proline to tRNA(Pro) in a two-step reaction: proline is first activated by ATP to form Pro-AMP and then transferred to the acceptor end of tRNA(Pro). The chain is Proline--tRNA ligase from Ehrlichia canis (strain Jake).